We begin with the raw amino-acid sequence, 416 residues long: Creatine kinase U-type, mitochondrial (416 aa).

The transit peptide at 1 to 39 (MAGPFSRLLSARPGLRLLALAGAGSLAAGFLLRPEPIRA) directs the protein to the mitochondrion. Residues 40–63 (ASERRRQYPPSAEYPDLRKHNNCM) are cardiolipin-binding. The 88-residue stretch at 44 to 131 (RRQYPPSAEY…FDPVIQERHN (88 aa)) folds into the Phosphagen kinase N-terminal domain. The residue at position 151 (Ser151) is a Phosphoserine. A Phosphagen kinase C-terminal domain is found at 158–400 (YVLSSRVRTG…NYLIDCERRL (243 aa)). 161–165 (SSRVR) lines the ATP pocket. Ser196 is subject to Phosphoserine. Thr213 bears the Phosphothreonine mark. His224 contacts ATP. The residue at position 232 (Ser232) is a Phosphoserine. ATP contacts are provided by residues Arg269, Arg325, and 353 to 358 (RGTGGV). The residue at position 355 (Thr355) is a Phosphothreonine. Ser365 carries the phosphoserine modification. Asp368 contributes to the ATP binding site.

This sequence belongs to the ATP:guanido phosphotransferase family. Exists as an octamer composed of four MTCK homodimers.

It is found in the mitochondrion inner membrane. The enzyme catalyses creatine + ATP = N-phosphocreatine + ADP + H(+). Its function is as follows. Reversibly catalyzes the transfer of phosphate between ATP and various phosphogens (e.g. creatine phosphate). Creatine kinase isoenzymes play a central role in energy transduction in tissues with large, fluctuating energy demands, such as skeletal muscle, heart, brain and spermatozoa. The polypeptide is Creatine kinase U-type, mitochondrial (CKMT1) (Sus scrofa (Pig)).